The primary structure comprises 513 residues: Cobyric acid synthase (513 aa).

One can recognise a GATase cobBQ-type domain in the interval 252 to 457 (KIDIAVIRLP…LHGIFDEEGI (206 aa)). The active-site Nucleophile is Cys-333. His-449 is an active-site residue.

This sequence belongs to the CobB/CobQ family. CobQ subfamily.

The protein operates within cofactor biosynthesis; adenosylcobalamin biosynthesis. Its function is as follows. Catalyzes amidations at positions B, D, E, and G on adenosylcobyrinic A,C-diamide. NH(2) groups are provided by glutamine, and one molecule of ATP is hydrogenolyzed for each amidation. This chain is Cobyric acid synthase, found in Lachnoclostridium phytofermentans (strain ATCC 700394 / DSM 18823 / ISDg) (Clostridium phytofermentans).